Reading from the N-terminus, the 95-residue chain is Protein Vpr (95 aa).

The tract at residues 1 to 42 (MEQAPEDQGPQREPYNEWALELLEDLKNEALRHFPRPWLHGL) is homooligomerization. Serine 79, serine 93, and serine 95 each carry phosphoserine; by host.

The protein belongs to the HIV-1 VPR protein family. As to quaternary structure, homooligomer, may form homodimer. Interacts with p6-gag region of the Pr55 Gag precursor protein through a (Leu-X-X)4 motif near the C-terminus of the P6gag protein. Interacts with host UNG. May interact with host RAD23A/HHR23A. Interacts with host VPRBP/DCAF1, leading to hijack the CUL4A-RBX1-DDB1-DCAF1/VPRBP complex, mediating ubiquitination of host proteins such as TERT and ZGPAT and arrest of the cell cycle in G2 phase. Post-translationally, phosphorylated on several residues by host. These phosphorylations regulate VPR activity for the nuclear import of the HIV-1 pre-integration complex.

It localises to the virion. Its subcellular location is the host nucleus. It is found in the host extracellular space. During virus replication, may deplete host UNG protein, and incude G2-M cell cycle arrest. Acts by targeting specific host proteins for degradation by the 26S proteasome, through association with the cellular CUL4A-DDB1 E3 ligase complex by direct interaction with host VPRPB/DCAF-1. Cell cycle arrest reportedly occurs within hours of infection and is not blocked by antiviral agents, suggesting that it is initiated by the VPR carried into the virion. Additionally, VPR induces apoptosis in a cell cycle dependent manner suggesting that these two effects are mechanistically linked. Detected in the serum and cerebrospinal fluid of AIDS patient, VPR may also induce cell death to bystander cells. In terms of biological role, during virus entry, plays a role in the transport of the viral pre-integration (PIC) complex to the host nucleus. This function is crucial for viral infection of non-dividing macrophages. May act directly at the nuclear pore complex, by binding nucleoporins phenylalanine-glycine (FG)-repeat regions. The polypeptide is Protein Vpr (Pan troglodytes (Chimpanzee)).